Consider the following 537-residue polypeptide: MADNLRRLVSNEALRSLQDKLESWLREYNANSCDQNLNHCLELIEQVAKVQGQLFGILTIAAQEGGHYDGVETIKSRLLPWLEASFTAASLGKPVDSKVPSLQDTFDKDRHKESGTRDIQQLDADLSATRNQLNQVQDDMAETEKTLEEPKNRSAISLLAAEEEINQLKKQLKSLQAQEESRHRNSDRRRSEKRGSERRRVELRGSEQRVSDLDRRSANQRNAEAVCDYEKQLRTLKDEIAVLSAEKSVLQGRSARSRSPSPAPCSRSHSRSRSTSPSSAKARTPSPNRAKLSSVARKAALLSRFSDAYSQGRLDAQCLLRRCIDKAETVQRIIYIATVEAFHVAKMAFRHFKIRVRKSLTPSCAGSNDFEDAVSDYIICHLDLYDSQSSVNDVIRAMNVNPKISFPPEVDFCLLSNFIQEICCIAFAMQTLEPPLDIAFGADGEIFNDCKYRRSYDSDFTAPLVFYHVWPALMENDCVIMKGEAVTRRGAFWNSVRSVSRCRSRSLSPICPRTRIGLGMISRSRSPSPIRCGLPRF.

Residues 1–273 are interaction with YWHAG/14-3-3 protein gamma; it reads MADNLRRLVS…PCSRSHSRSR (273 aa). Phosphoserine occurs at positions 85, 127, 154, and 157. Residues 115 to 253 adopt a coiled-coil conformation; sequence GTRDIQQLDA…SAEKSVLQGR (139 aa). 2 disordered regions span residues 171-221 and 249-293; these read QLKS…ANQR and VLQG…AKLS. Residues 179-217 are compositionally biased toward basic and acidic residues; it reads EESRHRNSDRRRSEKRGSERRRVELRGSEQRVSDLDRRS. Low complexity predominate over residues 253–287; sequence RSARSRSPSPAPCSRSHSRSRSTSPSSAKARTPSP. A phosphoserine mark is found at Ser-286 and Ser-508.

It belongs to the MIEAP family. Interacts (via coiled-coil domains) with BNIP3L (via BH3 domain). Interacts (via coiled-coil domains) with BNIP3 (via BH3 domain). Interacts with YWHAG/14-3-3 protein gamma; a protein that also plays a role in MALM.

It localises to the cytoplasm. The protein localises to the cytosol. The protein resides in the mitochondrion outer membrane. It is found in the mitochondrion matrix. Key regulator of mitochondrial quality that mediates the repairing or degradation of unhealthy mitochondria in response to mitochondrial damage. Mediator of mitochondrial protein catabolic process (also named MALM) by mediating the degradation of damaged proteins inside mitochondria by promoting the accumulation in the mitochondrial matrix of hydrolases that are characteristic of the lysosomal lumen. Also involved in mitochondrion degradation of damaged mitochondria by promoting the formation of vacuole-like structures (named MIV), which engulf and degrade unhealthy mitochondria by accumulating lysosomes. The physical interaction of SPATA18/MIEAP, BNIP3 and BNIP3L/NIX at the mitochondrial outer membrane regulates the opening of a pore in the mitochondrial double membrane in order to mediate the translocation of lysosomal proteins from the cytoplasm to the mitochondrial matrix. Binds cardiolipin. May form molecular condensates (non-membrane-bounded organelles) within mitochondria that compartmentalize and promote cardiolipin metabolism. The sequence is that of Mitochondria-eating protein (SPATA18) from Bos taurus (Bovine).